We begin with the raw amino-acid sequence, 317 residues long: L-lactate dehydrogenase 1 (317 aa).

NAD(+)-binding positions include V17, D38, K43, Y69, and G83–A84. Positions 86 and 92 each coordinate substrate. NAD(+) is bound by residues S105, A122 to N124, and S147. N124–D127 contacts substrate. D152–R155 serves as a coordination point for substrate. The active-site Proton acceptor is the H179. Y223 carries the phosphotyrosine modification. Position 232 (T232) interacts with substrate.

This sequence belongs to the LDH/MDH superfamily. LDH family. As to quaternary structure, homotetramer.

Its subcellular location is the cytoplasm. The enzyme catalyses (S)-lactate + NAD(+) = pyruvate + NADH + H(+). It participates in fermentation; pyruvate fermentation to lactate; (S)-lactate from pyruvate: step 1/1. Functionally, catalyzes the conversion of lactate to pyruvate (Potential). Appears to be the primary factor that allows S.aureus growth during nitrosative stress in both aerobically and anaerobically cultured cells. The sequence is that of L-lactate dehydrogenase 1 from Staphylococcus aureus (strain MRSA252).